The primary structure comprises 425 residues: Ribosome biogenesis protein WDR12 homolog (425 aa).

Positions 13 to 94 (LQLHLITKQK…EDTVELEYVE (82 aa)) are ubiquitin-like (UBL) domain. WD repeat units lie at residues 106-143 (LHDD…KLTI), 145-187 (GHIA…NSVE), 194-233 (GHER…GGGD), 258-296 (GHRE…IKSE), 298-337 (SGNK…GTLV), 343-383 (GHTQ…APIF), and 387-425 (GHED…GGEK). A disordered region spans residues 227–247 (VRSGGGDSEPSTSKRQKLDQG).

Belongs to the WD repeat WDR12/YTM1 family.

It is found in the nucleus. The protein resides in the nucleolus. It localises to the nucleoplasm. Required for maturation of ribosomal RNAs and formation of the large ribosomal subunit. The sequence is that of Ribosome biogenesis protein WDR12 homolog from Culex quinquefasciatus (Southern house mosquito).